Consider the following 232-residue polypeptide: V-type ATP synthase subunit E (232 aa).

This sequence belongs to the V-ATPase E subunit family.

In terms of biological role, produces ATP from ADP in the presence of a proton gradient across the membrane. The polypeptide is V-type ATP synthase subunit E (atpE) (Treponema pallidum (strain Nichols)).